The following is a 96-amino-acid chain: Phosphoribosyl-ATP pyrophosphatase (96 aa).

The protein belongs to the PRA-PH family.

It localises to the cytoplasm. It catalyses the reaction 1-(5-phospho-beta-D-ribosyl)-ATP + H2O = 1-(5-phospho-beta-D-ribosyl)-5'-AMP + diphosphate + H(+). The protein operates within amino-acid biosynthesis; L-histidine biosynthesis; L-histidine from 5-phospho-alpha-D-ribose 1-diphosphate: step 2/9. The chain is Phosphoribosyl-ATP pyrophosphatase from Methanococcus maripaludis (strain C6 / ATCC BAA-1332).